A 192-amino-acid polypeptide reads, in one-letter code: Small ribosomal subunit protein uS5 (192 aa).

Residues Met-1–Asp-21 are disordered. The 64-residue stretch at Phe-24–Val-87 folds into the S5 DRBM domain.

This sequence belongs to the universal ribosomal protein uS5 family. As to quaternary structure, part of the 30S ribosomal subunit. Contacts proteins S4 and S8.

Functionally, with S4 and S12 plays an important role in translational accuracy. Its function is as follows. Located at the back of the 30S subunit body where it stabilizes the conformation of the head with respect to the body. This is Small ribosomal subunit protein uS5 from Afipia carboxidovorans (strain ATCC 49405 / DSM 1227 / KCTC 32145 / OM5) (Oligotropha carboxidovorans).